A 442-amino-acid polypeptide reads, in one-letter code: UDP-glucosyltransferase 29 (442 aa).

Histidine 20 (proton acceptor) is an active-site residue. Residue histidine 20 participates in an anthocyanidin binding. The active-site Charge relay is the aspartate 116. Threonine 138, alanine 318, glutamine 320, histidine 335, tryptophan 338, serine 340, glutamate 343, aspartate 359, and glutamine 360 together coordinate UDP-alpha-D-glucose.

It belongs to the UDP-glycosyltransferase family. As to expression, expressed at higher levels in roots than in leaves.

It carries out the reaction (20S)-ginsenoside F2 + UDP-alpha-D-glucose = (20S)-ginsenoside Rd + UDP + H(+). The catalysed reaction is (20S)-ginsenoside Rh2 + UDP-alpha-D-glucose = (20S)-ginsenoside Rg3 + UDP + H(+). It functions in the pathway secondary metabolite biosynthesis; terpenoid biosynthesis. Its function is as follows. Component of the dammarane-type triterpene saponins (e.g. PPD-type ginsenosides or panaxosides) biosynthetic pathway. Glycosyltransferase that catalyzes the conversion of ginsenoside Rh2 to ginsenoside Rg3. Triggers the biosynthesis of ginsenoside Rd from ginsenoside F2. This is UDP-glucosyltransferase 29 from Panax ginseng (Korean ginseng).